The chain runs to 299 residues: Oxygen-dependent coproporphyrinogen-III oxidase (299 aa).

Ser92 serves as a coordination point for substrate. A divalent metal cation contacts are provided by His96 and His106. His106 acts as the Proton donor in catalysis. Residue 108–110 coordinates substrate; that stretch reads NVR. The a divalent metal cation site is built by His145 and His175. The interval 240–275 is important for dimerization; sequence YVEFNLVWDRGTLFGLQTGGRTESILMSMPPLVRWE. 258 to 260 contacts substrate; it reads GGR.

It belongs to the aerobic coproporphyrinogen-III oxidase family. In terms of assembly, homodimer. A divalent metal cation is required as a cofactor.

The protein localises to the cytoplasm. It catalyses the reaction coproporphyrinogen III + O2 + 2 H(+) = protoporphyrinogen IX + 2 CO2 + 2 H2O. Its pathway is porphyrin-containing compound metabolism; protoporphyrin-IX biosynthesis; protoporphyrinogen-IX from coproporphyrinogen-III (O2 route): step 1/1. Functionally, involved in the heme biosynthesis. Catalyzes the aerobic oxidative decarboxylation of propionate groups of rings A and B of coproporphyrinogen-III to yield the vinyl groups in protoporphyrinogen-IX. This chain is Oxygen-dependent coproporphyrinogen-III oxidase, found in Citrobacter koseri (strain ATCC BAA-895 / CDC 4225-83 / SGSC4696).